The following is a 1082-amino-acid chain: MTTTIGSPQMLANEERLSNEMHALKNRSEQNGQEQQGPVKNTQLHGPSATDPETTATQKESLEMVPKDTSAATMTSAPPPALPHVEINQVSLALVIRNLTVFTMKELAQYMKTNVHTQANEPNSAKKIRFLQLIIFLRTQFLKLYVLVKWTRTIKQNNFHVLIDLLNWFRTTNMNVNNCIWALKSSLNSMTNAKLPNVDLVTALEVLSLGRPNLPTHNFKLSGVSNSMDMVDGMAKVPIGLILQRLKDLNLTVSIKIALMNIPKPLNSYHIKNGRIYFTVPNEFEIQLSTVNRQSPLFFVDLKLLFNTEAEQTVSAVTEATSTNGDSENNEENSSSNGNNLPLNKPRLEKLINEILLKSNDPLLSLYNFLHKYVLTLQLYMVHREFLKLANGGKFSKSNLIHNYDSKKSTITVRYWLNGKMDSKGKITIGIQRTTESLILKWDNQSASRAKNMPVIYNNIVSNIEGILDEIMFNHARIIRSELLARDIFQEDEENSDVLLFQLPTTCVSMAPIQLKIDLLSGQFYFRNPTPLLSNYASKINRAEGPEELARILQQLKLDKIIHVLTTMFENTGWSCSRIIKIDKPIRTQVNTGGESVVKKEDNKYAIAGNSTTNSDVSLLLQRDLFIRLPHWPLNWYLILSIISSKTSCVVEKRIGKIVSQRGKWNLKYLDNSNVMTVKLESITYQKIMILQRTILNRIINHMLIDSLNQLEIRNKICSSEMINEQKLPQYIIQGSNTNDNISIITLELESFLEGSKALNSILESSMFLRIDYSNSQIRLYAKFKRNTMMIQCQIDKLYIHFVQEEPLAFYLEESFTNLGIIVQYLTKFRQKLMQLVVLTDVVERLHKNFESENFKIIALQPNEISFKYLSNNDEDDKDCTIKISTNDDSIKNLTVQLSPSNPQHIIQPFLDNSKMDYHFIFSYLQFTSSLFKALKVILNERGGKFHESGSQYSTMVNIGLHNLNEYQIVYYNPQAGTKITICIELKTVLHNGRDKIQFHIHFADVAHITTKSPAYPMMHQVRNQVFMLDTKRLGTPESVKPANASHAIRLGNGVACDPSEIEPILMEIHNILKVDSNSSSS.

Disordered regions lie at residues 1–80 and 319–343; these read MTTT…APPP and EATS…NLPL. T2 is modified (N-acetylthreonine). S7 bears the Phosphoserine mark. Over residues 13 to 28 the composition is skewed to basic and acidic residues; sequence NEERLSNEMHALKNRS. Residues 29–59 show a composition bias toward polar residues; that stretch reads EQNGQEQQGPVKNTQLHGPSATDPETTATQK. Positions 321-340 are enriched in low complexity; the sequence is TSTNGDSENNEENSSSNGNN. T1036 is subject to Phosphothreonine.

It belongs to the Mediator complex subunit 14 family. Component of the Mediator complex, which is composed of at least 21 subunits that form three structurally distinct submodules. The Mediator head module contains MED6, MED8, MED11, SRB4/MED17, SRB5/MED18, ROX3/MED19, SRB2/MED20 and SRB6/MED22, the middle module contains MED1, MED4, NUT1/MED5, MED7, CSE2/MED9, NUT2/MED10, SRB7/MED21 and SOH1/MED31, and the tail module contains MED2, PGD1/MED3, RGR1/MED14, GAL11/MED15 and SIN4/MED16. The head and the middle modules interact directly with RNA polymerase II, whereas the elongated tail module interacts with gene-specific regulatory proteins.

The protein resides in the nucleus. Its function is as follows. Component of the Mediator complex, a coactivator involved in the regulated transcription of nearly all RNA polymerase II-dependent genes. Mediator functions as a bridge to convey information from gene-specific regulatory proteins to the basal RNA polymerase II transcription machinery. The Mediator complex, having a compact conformation in its free form, is recruited to promoters by direct interactions with regulatory proteins and serves for the assembly of a functional preinitiation complex with RNA polymerase II and the general transcription factors. The Mediator complex unfolds to an extended conformation and partially surrounds RNA polymerase II, specifically interacting with the unphosphorylated form of the C-terminal domain (CTD) of RNA polymerase II. The Mediator complex dissociates from the RNA polymerase II holoenzyme and stays at the promoter when transcriptional elongation begins. The polypeptide is Mediator of RNA polymerase II transcription subunit 14 (RGR1) (Saccharomyces cerevisiae (strain ATCC 204508 / S288c) (Baker's yeast)).